A 155-amino-acid polypeptide reads, in one-letter code: Small ribosomal subunit protein uS7 (155 aa).

The protein belongs to the universal ribosomal protein uS7 family. Part of the 30S ribosomal subunit. Contacts proteins S9 and S11.

In terms of biological role, one of the primary rRNA binding proteins, it binds directly to 16S rRNA where it nucleates assembly of the head domain of the 30S subunit. Is located at the subunit interface close to the decoding center, probably blocks exit of the E-site tRNA. The sequence is that of Small ribosomal subunit protein uS7 from Corynebacterium efficiens (strain DSM 44549 / YS-314 / AJ 12310 / JCM 11189 / NBRC 100395).